The chain runs to 310 residues: Prohibitin-2 (310 aa).

The chain crosses the membrane as a helical; Signal-anchor for type II membrane protein span at residues 38–58 (FAGLGGLLLLGGGALFINNAL). The interaction with ATG8 stretch occupies residues 130–144 (DVVQLPTIYRTLGQD). The short motif at 138–141 (YRTL) is the AIM element. A coiled-coil region spans residues 212–253 (NAVEAKQIAQQDAQRAAFVVDKARQEKQGMVVRAQGEAKSAE).

This sequence belongs to the prohibitin family. The mitochondrial prohibitin complex consists of two subunits (PHB1 and PHB2). The subunits assemble into a membrane-associated ring-shaped supercomplex of approximately 1 mDa. The mitochondrial prohibitin complex interacts with the m-AAA protease, a heterohexamer composed of YTA12/RCA1 and YTA10/AFG3. The mitochondrial prohibitin complex interacts with ATG8 and the interaction may support mitophagosome assembly. In terms of processing, the N-terminus is blocked.

Its subcellular location is the mitochondrion inner membrane. Its function is as follows. Prohibitin probably acts as a holdase/unfoldase for the stabilization of newly synthesized mitochondrial proteins. Involved in mitophagy; may act as an adapter for ATG8 that supports mitophagosome assembly. Negatively regulates the proteolytic processing of ATG32 via the i-AAA protease. Acts as a negative regulator of the m-AAA protease. In Saccharomyces cerevisiae (strain ATCC 204508 / S288c) (Baker's yeast), this protein is Prohibitin-2 (PHB2).